A 338-amino-acid chain; its full sequence is Nicotinate-nucleotide--dimethylbenzimidazole phosphoribosyltransferase (338 aa).

Catalysis depends on E305, which acts as the Proton acceptor.

It belongs to the CobT family.

It carries out the reaction 5,6-dimethylbenzimidazole + nicotinate beta-D-ribonucleotide = alpha-ribazole 5'-phosphate + nicotinate + H(+). The protein operates within nucleoside biosynthesis; alpha-ribazole biosynthesis; alpha-ribazole from 5,6-dimethylbenzimidazole: step 1/2. In terms of biological role, catalyzes the synthesis of alpha-ribazole-5'-phosphate from nicotinate mononucleotide (NAMN) and 5,6-dimethylbenzimidazole (DMB). The protein is Nicotinate-nucleotide--dimethylbenzimidazole phosphoribosyltransferase of Rhizobium meliloti (strain 1021) (Ensifer meliloti).